Consider the following 512-residue polypeptide: Cytochrome P450 26B1 (512 aa).

Cysteine 441 provides a ligand contact to heme.

The protein belongs to the cytochrome P450 family. Heme is required as a cofactor.

It is found in the endoplasmic reticulum membrane. The protein resides in the microsome membrane. It catalyses the reaction all-trans-retinoate + reduced [NADPH--hemoprotein reductase] + O2 = all-trans-4-hydroxyretinoate + oxidized [NADPH--hemoprotein reductase] + H2O + H(+). The enzyme catalyses all-trans-retinoate + reduced [NADPH--hemoprotein reductase] + O2 = all-trans-18-hydroxyretinoate + oxidized [NADPH--hemoprotein reductase] + H2O + H(+). In terms of biological role, a cytochrome P450 monooxygenase involved in the metabolism of retinoates (RAs), the active metabolites of vitamin A, and critical signaling molecules in animals. RAs exist as at least four different isomers: all-trans-RA (atRA), 9-cis-RA, 13-cis-RA, and 9,13-dicis-RA, where atRA is considered to be the biologically active isomer, although 9-cis-RA and 13-cis-RA also have activity. Catalyzes the hydroxylation of atRA primarily at C-4 and C-18, thereby contributing to the regulation of atRA homeostasis and signaling. Hydroxylation of atRA limits its biological activity and initiates a degradative process leading to its eventual elimination. Involved in the convertion of atRA to all-trans-4-oxo-RA. Can oxidize all-trans-13,14-dihydroretinoate (DRA) to metabolites which could include all-trans-4-oxo-DRA, all-trans-4-hydroxy-DRA, all-trans-5,8-epoxy-DRA, and all-trans-18-hydroxy-DRA. Shows preference for the following substrates: atRA &gt; 9-cis-RA &gt; 13-cis-RA. Plays a central role in germ cell development: acts by degrading RAs in the developing testis, preventing STRA8 expression, thereby leading to delay of meiosis. Required for the maintenance of the undifferentiated state of male germ cells during embryonic development in Sertoli cells, inducing arrest in G0 phase of the cell cycle and preventing meiotic entry. Plays a role in skeletal development, both at the level of patterning and in the ossification of bone and the establishment of some synovial joints. Essential for postnatal survival. Its function is as follows. Also has a significant activity in oxidation of tazarotenic acid and may therefore metabolize that xenobiotic in vivo. The sequence is that of Cytochrome P450 26B1 (Cyp26b1) from Rattus norvegicus (Rat).